The primary structure comprises 956 residues: Translation initiation factor IF-2 (956 aa).

Residues 33-370 form a disordered region; the sequence is SHASSVEEAD…PVTERKFHEL (338 aa). A compositionally biased stretch (polar residues) spans 46–60; that stretch reads IASSFSAGVTKNVQA. Residues 63–73 are compositionally biased toward basic and acidic residues; that stretch reads AKDKQVAEQKA. A compositionally biased stretch (low complexity) spans 76–100; sequence AKATTPQPAASKAAEKPAAATQEAS. Basic and acidic residues-rich tracts occupy residues 112–125, 134–143, and 179–192; these read FKAE…EQVA, SNDRKSDYRQ, and NDGH…DKNR. Positions 199 to 213 are enriched in low complexity; sequence RQQDTGRQGQTQAGA. Composition is skewed to basic and acidic residues over residues 234-258 and 266-276; these read ARQR…RQEA and QTEDKKHREAS. Residues 277–293 show a composition bias toward low complexity; that stretch reads AKATESVASMAAASVAK. Residues 303-320 show a composition bias toward basic and acidic residues; it reads NRPDKGHDRDHGLEDGQK. The span at 325 to 343 shows a compositional bias: low complexity; that stretch reads SWNSQNQVRNQKNSNWNNN. The span at 344–354 shows a compositional bias: basic residues; it reads KKNKKGKHHKN. In terms of domain architecture, tr-type G spans 457–626; that stretch reads ERAPVVTIMG…LLVAEVEELK (170 aa). Positions 466–473 are G1; it reads GHVDHGKT. 466–473 is a GTP binding site; that stretch reads GHVDHGKT. Residues 491-495 form a G2 region; sequence GITQH. The G3 stretch occupies residues 512 to 515; sequence DTPG. Residues 512 to 516 and 566 to 569 each bind GTP; these read DTPGH and NKID. A G4 region spans residues 566 to 569; it reads NKID. Residues 602–604 are G5; it reads SAK.

Belongs to the TRAFAC class translation factor GTPase superfamily. Classic translation factor GTPase family. IF-2 subfamily.

It localises to the cytoplasm. Its function is as follows. One of the essential components for the initiation of protein synthesis. Protects formylmethionyl-tRNA from spontaneous hydrolysis and promotes its binding to the 30S ribosomal subunits. Also involved in the hydrolysis of GTP during the formation of the 70S ribosomal complex. The polypeptide is Translation initiation factor IF-2 (Streptococcus equi subsp. equi (strain 4047)).